We begin with the raw amino-acid sequence, 329 residues long: Mas-related G-protein coupled receptor member X2 (329 aa).

Over 1–33 (MDPTTPAWGTESTTMDGNDQSLPLLCDKEALIP) the chain is Extracellular. Residues 34–54 (VFLILFIALVGLVGNGFVLWL) traverse the membrane as a helical segment. Residues 55–63 (LGFRMSRNA) lie on the Cytoplasmic side of the membrane. A helical transmembrane segment spans residues 64-84 (FSVYVLSLAGADFLFLCFQII). Topologically, residues 85–96 (NCLVYLRDFFCS) are extracellular. Residues 97 to 117 (ISINFPSXFTTVMTCAYLAGL) form a helical membrane-spanning segment. The Cytoplasmic portion of the chain corresponds to 118–144 (SMLSTISTERCLSVLWPIWYRCRRPRH). A helical transmembrane segment spans residues 145–165 (LSAVVCVLLWALSLLLSILEG). The Extracellular portion of the chain corresponds to 166 to 184 (KFCGFLFSDGDFGWCQIFD). The helical transmembrane segment at 185 to 205 (FITAAWLIFLFVVLCASSLAL) threads the bilayer. At 206 to 228 (LVRILCGSRGLPLTRLYLTILLT) the chain is on the cytoplasmic side. Residues 229–249 (VLVFLLCGLPFGIQWFLILGF) traverse the membrane as a helical segment. Over 250–263 (WNSDVLLCHIHLVS) the chain is Extracellular. The chain crosses the membrane as a helical span at residues 264–284 (VVLSSLNSSANPIIYFFVGSF). Residues 285–329 (RKQWRLQQPILKLAFQRALQDTAEVDHSEGCFPQGTSEMSRSSLV) lie on the Cytoplasmic side of the membrane.

The protein belongs to the G-protein coupled receptor 1 family. Mas subfamily.

The protein localises to the cell membrane. Functionally, mast cell-specific receptor for basic secretagogues, i.e. cationic amphiphilic drugs, as well as endo- or exogenous peptides, consisting of a basic head group and a hydrophobic core. Recognizes and binds small molecules containing a cyclized tetrahydroisoquinoline (THIQ), such as non-steroidal neuromuscular blocking drugs (NMBDs), including tubocurarine and atracurium. In response to these compounds, mediates pseudo-allergic reactions characterized by histamine release, inflammation and airway contraction. The chain is Mas-related G-protein coupled receptor member X2 (MRGPRX2) from Hoolock hoolock (Western hoolock gibbon).